The primary structure comprises 293 residues: Phospholipid scramblase 2 (293 aa).

Residues 1-39 (MDKQNVQMNPPHPGTNLTGPPGHIGYPGPQAGYAVPPPG) are disordered. The segment at 1 to 66 (MDKQNVQMNP…GHPGAPTQVP (66 aa)) is proline-rich domain (PRD). At 1–270 (MDKQNVQMNP…IQFPLDLDVK (270 aa)) the chain is on the cytoplasmic side. Phosphothreonine; by PKC is present on Thr143. S-palmitoyl cysteine attachment occurs at residues Cys166, Cys167, Cys170, and Cys171. Residues 271–287 (MKAVMLGACFLIDFMFF) form a helical membrane-spanning segment. Topologically, residues 288 to 293 (EMTRGE) are extracellular.

Belongs to the phospholipid scramblase family. It depends on Ca(2+) as a cofactor.

The protein localises to the membrane. The catalysed reaction is a 1,2-diacyl-sn-glycero-3-phosphocholine(in) = a 1,2-diacyl-sn-glycero-3-phosphocholine(out). May catalyze calcium-induced ATP-independent rapid bidirectional and non-specific movement of phospholipids (lipid scrambling or lipid flip-flop) between the inner and outer leaflet of the plasma membrane. In Bos taurus (Bovine), this protein is Phospholipid scramblase 2.